Reading from the N-terminus, the 230-residue chain is Orotidine 5'-phosphate decarboxylase (230 aa).

Residues aspartate 10, lysine 32, 59–68, threonine 119, arginine 180, glutamine 189, glycine 209, and arginine 210 each bind substrate; that span reads DLKYHDIPNT. Residue lysine 61 is the Proton donor of the active site.

The protein belongs to the OMP decarboxylase family. Type 1 subfamily. In terms of assembly, homodimer.

The enzyme catalyses orotidine 5'-phosphate + H(+) = UMP + CO2. It participates in pyrimidine metabolism; UMP biosynthesis via de novo pathway; UMP from orotate: step 2/2. Its function is as follows. Catalyzes the decarboxylation of orotidine 5'-monophosphate (OMP) to uridine 5'-monophosphate (UMP). This chain is Orotidine 5'-phosphate decarboxylase, found in Haemophilus influenzae (strain PittEE).